Here is a 298-residue protein sequence, read N- to C-terminus: ADP/ATP translocase 1 (298 aa).

At 1 to 7 (MGDQALS) the chain is on the mitochondrial intermembrane side. Residue glycine 2 is modified to N-acetylglycine. The stretch at 6–98 (LSFLKDFLAG…FAFKDKYKQI (93 aa)) is one Solcar 1 repeat. The residue at position 7 (serine 7) is a Phosphoserine. A helical transmembrane segment spans residues 8 to 37 (FLKDFLAGGIAAAVSKTAVAPIERVKLLLQ). At 38-74 (VQHASKQISAEKQYKGIIDCVVRIPKEQGFLSFWRGN) the chain is on the mitochondrial matrix side. Lysine 52 carries the post-translational modification N6,N6,N6-trimethyllysine. Residues 75 to 99 (LANVIRYFPTQALNFAFKDKYKQIF) traverse the membrane as a helical segment. ADP is bound by residues arginine 80 and lysine 92. At 100-109 (LGGVDRHKQF) the chain is on the mitochondrial intermembrane side. A helical membrane pass occupies residues 110–130 (WRYFAGNLASGGAAGATSLCF). Solcar repeat units lie at residues 111 to 201 (RYFA…AKGM) and 212 to 297 (VSWM…IKKY). Topologically, residues 131-178 (VYPLDFARTRLAADVGKGSSQREFNGLGDCLTKIFKSDGLKGLYQGFS) are mitochondrial matrix. Position 147 is an N6-succinyllysine (lysine 147). 2 positions are modified to phosphoserine: serine 149 and serine 150. Cysteine 160 carries the post-translational modification S-nitrosocysteine. The helical transmembrane segment at 179 to 199 (VSVQGIIIYRAAYFGVYDTAK) threads the bilayer. Over 200–210 (GMLPDPKNVHI) the chain is Mitochondrial intermembrane. Residues 211–231 (IVSWMIAQSVTAVAGLVSYPF) form a helical membrane-spanning segment. Topologically, residues 232-273 (DTVRRRMMMQSGRKGADIMYTGTVDCWRKIAKDEGRKAFFKG) are mitochondrial matrix. Position 235 (arginine 235) interacts with ADP. Positions 235–240 (RRRMMM) are important for transport activity. The Nucleotide carrier signature motif signature appears at 235–240 (RRRMMM). Lysine 245 and lysine 272 each carry N6-succinyllysine. A helical membrane pass occupies residues 274–291 (AWSNVLRGMGGAFVLVLY). At 292 to 298 (DEIKKYV) the chain is on the mitochondrial intermembrane side.

This sequence belongs to the mitochondrial carrier (TC 2.A.29) family. In terms of assembly, monomer. Found in a complex with ARL2, ARL2BP and SLC25A4/ANT1. Interacts with ARL2BP. Interacts with TIMM44; leading to inhibit the presequence translocase TIMM23, thereby promoting stabilization of PINK1. Under cell death induction, transglutaminated by TGM2. Transglutamination leads to formation of covalent cross-links between a glutamine and the epsilon-amino group of a lysine residue, forming polymers.

The protein localises to the mitochondrion inner membrane. Its subcellular location is the membrane. It carries out the reaction ADP(in) + ATP(out) = ADP(out) + ATP(in). It catalyses the reaction H(+)(in) = H(+)(out). The matrix-open state (m-state) is inhibited by the membrane-permeable bongkrekic acid (BKA). The cytoplasmic-open state (c-state) is inhibited by the membrane-impermeable toxic inhibitor carboxyatractyloside (CATR). Proton transporter activity is inhibited by ADP:ATP antiporter activity. ADP:ATP antiporter that mediates import of ADP into the mitochondrial matrix for ATP synthesis, and export of ATP out to fuel the cell. Cycles between the cytoplasmic-open state (c-state) and the matrix-open state (m-state): operates by the alternating access mechanism with a single substrate-binding site intermittently exposed to either the cytosolic (c-state) or matrix (m-state) side of the inner mitochondrial membrane. In addition to its ADP:ATP antiporter activity, also involved in mitochondrial uncoupling and mitochondrial permeability transition pore (mPTP) activity. Plays a role in mitochondrial uncoupling by acting as a proton transporter: proton transport uncouples the proton flows via the electron transport chain and ATP synthase to reduce the efficiency of ATP production and cause mitochondrial thermogenesis. Proton transporter activity is inhibited by ADP:ATP antiporter activity, suggesting that SLC25A4/ANT1 acts as a master regulator of mitochondrial energy output by maintaining a delicate balance between ATP production (ADP:ATP antiporter activity) and thermogenesis (proton transporter activity). Proton transporter activity requires free fatty acids as cofactor, but does not transport it. Also plays a key role in mPTP opening, a non-specific pore that enables free passage of the mitochondrial membranes to solutes of up to 1.5 kDa, and which contributes to cell death. It is however unclear if SLC25A4/ANT1 constitutes a pore-forming component of mPTP or regulates it. Acts as a regulator of mitophagy independently of ADP:ATP antiporter activity: promotes mitophagy via interaction with TIMM44, leading to inhibit the presequence translocase TIMM23, thereby promoting stabilization of PINK1. This Rattus norvegicus (Rat) protein is ADP/ATP translocase 1.